An 89-amino-acid polypeptide reads, in one-letter code: Small ribosomal subunit protein uS15 (89 aa).

It belongs to the universal ribosomal protein uS15 family. Part of the 30S ribosomal subunit. Forms a bridge to the 50S subunit in the 70S ribosome, contacting the 23S rRNA.

One of the primary rRNA binding proteins, it binds directly to 16S rRNA where it helps nucleate assembly of the platform of the 30S subunit by binding and bridging several RNA helices of the 16S rRNA. Functionally, forms an intersubunit bridge (bridge B4) with the 23S rRNA of the 50S subunit in the ribosome. This chain is Small ribosomal subunit protein uS15, found in Chromobacterium violaceum (strain ATCC 12472 / DSM 30191 / JCM 1249 / CCUG 213 / NBRC 12614 / NCIMB 9131 / NCTC 9757 / MK).